We begin with the raw amino-acid sequence, 370 residues long: Chaperone protein DnaJ (370 aa).

The J domain maps to 4–68; that stretch reads DYYQVLGVSK…QKRAAYDRFG (65 aa). The CR-type zinc finger occupies 133 to 211; sequence GIEKNISFSS…CHGMGRYHKQ (79 aa). Residues C146, C149, C163, C166, C185, C188, C199, and C202 each coordinate Zn(2+). CXXCXGXG motif repeat units lie at residues 146-153, 163-170, 185-192, and 199-206; these read CDACHGTG, CDSCGGVG, CHKCQGNG, and CKKCHGMG.

It belongs to the DnaJ family. Homodimer. Zn(2+) is required as a cofactor.

It is found in the cytoplasm. Functionally, participates actively in the response to hyperosmotic and heat shock by preventing the aggregation of stress-denatured proteins and by disaggregating proteins, also in an autonomous, DnaK-independent fashion. Unfolded proteins bind initially to DnaJ; upon interaction with the DnaJ-bound protein, DnaK hydrolyzes its bound ATP, resulting in the formation of a stable complex. GrpE releases ADP from DnaK; ATP binding to DnaK triggers the release of the substrate protein, thus completing the reaction cycle. Several rounds of ATP-dependent interactions between DnaJ, DnaK and GrpE are required for fully efficient folding. Also involved, together with DnaK and GrpE, in the DNA replication of plasmids through activation of initiation proteins. The protein is Chaperone protein DnaJ of Rickettsia typhi (strain ATCC VR-144 / Wilmington).